The chain runs to 132 residues: Small ribosomal subunit protein uS8 (132 aa).

It belongs to the universal ribosomal protein uS8 family. Part of the 30S ribosomal subunit. Contacts proteins S5 and S12.

Functionally, one of the primary rRNA binding proteins, it binds directly to 16S rRNA central domain where it helps coordinate assembly of the platform of the 30S subunit. The chain is Small ribosomal subunit protein uS8 from Anaeromyxobacter dehalogenans (strain 2CP-1 / ATCC BAA-258).